The primary structure comprises 675 residues: Methionine--tRNA ligase (675 aa).

Residues 15–25 carry the 'HIGH' region motif; that stretch reads PYANGPIHLGH. Zn(2+) is bound by residues C146, C149, C159, and C162. The short motif at 332–336 is the 'KMSKS' region element; sequence KMSKS. K335 serves as a coordination point for ATP. The 102-residue stretch at 574 to 675 folds into the tRNA-binding domain; the sequence is DFAKIDLRVA…AGAKPGMRVK (102 aa).

The protein belongs to the class-I aminoacyl-tRNA synthetase family. MetG type 1 subfamily. Homodimer. It depends on Zn(2+) as a cofactor.

It localises to the cytoplasm. The enzyme catalyses tRNA(Met) + L-methionine + ATP = L-methionyl-tRNA(Met) + AMP + diphosphate. In terms of biological role, is required not only for elongation of protein synthesis but also for the initiation of all mRNA translation through initiator tRNA(fMet) aminoacylation. In Shewanella amazonensis (strain ATCC BAA-1098 / SB2B), this protein is Methionine--tRNA ligase.